Consider the following 483-residue polypeptide: ATP synthase subunit beta (483 aa).

Position 169–176 (169–176 (GGAGVGKT)) interacts with ATP.

The protein belongs to the ATPase alpha/beta chains family. In terms of assembly, F-type ATPases have 2 components, CF(1) - the catalytic core - and CF(0) - the membrane proton channel. CF(1) has five subunits: alpha(3), beta(3), gamma(1), delta(1), epsilon(1). CF(0) has three main subunits: a(1), b(2) and c(9-12). The alpha and beta chains form an alternating ring which encloses part of the gamma chain. CF(1) is attached to CF(0) by a central stalk formed by the gamma and epsilon chains, while a peripheral stalk is formed by the delta and b chains.

The protein resides in the cell membrane. It catalyses the reaction ATP + H2O + 4 H(+)(in) = ADP + phosphate + 5 H(+)(out). Produces ATP from ADP in the presence of a proton gradient across the membrane. The catalytic sites are hosted primarily by the beta subunits. The chain is ATP synthase subunit beta from Corynebacterium glutamicum (strain ATCC 13032 / DSM 20300 / JCM 1318 / BCRC 11384 / CCUG 27702 / LMG 3730 / NBRC 12168 / NCIMB 10025 / NRRL B-2784 / 534).